Consider the following 399-residue polypeptide: Nicotinate phosphoribosyltransferase (399 aa).

A Phosphohistidine; by autocatalysis modification is found at His217.

It belongs to the NAPRTase family. Transiently phosphorylated on a His residue during the reaction cycle. Phosphorylation strongly increases the affinity for substrates and increases the rate of nicotinate D-ribonucleotide production. Dephosphorylation regenerates the low-affinity form of the enzyme, leading to product release.

It carries out the reaction nicotinate + 5-phospho-alpha-D-ribose 1-diphosphate + ATP + H2O = nicotinate beta-D-ribonucleotide + ADP + phosphate + diphosphate. It functions in the pathway cofactor biosynthesis; NAD(+) biosynthesis; nicotinate D-ribonucleotide from nicotinate: step 1/1. In terms of biological role, catalyzes the synthesis of beta-nicotinate D-ribonucleotide from nicotinate and 5-phospho-D-ribose 1-phosphate at the expense of ATP. In Burkholderia ambifaria (strain MC40-6), this protein is Nicotinate phosphoribosyltransferase.